A 289-amino-acid polypeptide reads, in one-letter code: Ribonuclease HII (289 aa).

The interval 1-55 is disordered; the sequence is MIRDQAKTPGRAKSAAAAKASPAAKGGGNEAAQSAAGKAAAKPAAKPATSKSGKG. Low complexity-rich tracts occupy residues 7-24 and 31-55; these read KTPG…SPAA and AAQS…SGKG. Residues 76–264 enclose the RNase H type-2 domain; the sequence is WPVAGCDEAG…VVAARRKHQP (189 aa). A divalent metal cation-binding residues include Asp82, Glu83, and Asp173.

This sequence belongs to the RNase HII family. The cofactor is Mn(2+). Mg(2+) serves as cofactor.

The protein resides in the cytoplasm. It carries out the reaction Endonucleolytic cleavage to 5'-phosphomonoester.. Functionally, endonuclease that specifically degrades the RNA of RNA-DNA hybrids. The polypeptide is Ribonuclease HII (Bradyrhizobium sp. (strain BTAi1 / ATCC BAA-1182)).